The sequence spans 338 residues: Ketol-acid reductoisomerase (NADP(+)) (338 aa).

Residues methionine 1–threonine 181 enclose the KARI N-terminal Rossmann domain. NADP(+) contacts are provided by residues tyrosine 24–glutamine 27, arginine 47, serine 50, serine 52, and aspartate 82–glutamine 85. Histidine 107 is a catalytic residue. Glycine 133 serves as a coordination point for NADP(+). The KARI C-terminal knotted domain occupies serine 182 to isoleucine 327. Mg(2+) contacts are provided by aspartate 190, glutamate 194, glutamate 226, and glutamate 230. Residue serine 251 coordinates substrate.

Belongs to the ketol-acid reductoisomerase family. Mg(2+) is required as a cofactor.

It carries out the reaction (2R)-2,3-dihydroxy-3-methylbutanoate + NADP(+) = (2S)-2-acetolactate + NADPH + H(+). The enzyme catalyses (2R,3R)-2,3-dihydroxy-3-methylpentanoate + NADP(+) = (S)-2-ethyl-2-hydroxy-3-oxobutanoate + NADPH + H(+). It participates in amino-acid biosynthesis; L-isoleucine biosynthesis; L-isoleucine from 2-oxobutanoate: step 2/4. Its pathway is amino-acid biosynthesis; L-valine biosynthesis; L-valine from pyruvate: step 2/4. Functionally, involved in the biosynthesis of branched-chain amino acids (BCAA). Catalyzes an alkyl-migration followed by a ketol-acid reduction of (S)-2-acetolactate (S2AL) to yield (R)-2,3-dihydroxy-isovalerate. In the isomerase reaction, S2AL is rearranged via a Mg-dependent methyl migration to produce 3-hydroxy-3-methyl-2-ketobutyrate (HMKB). In the reductase reaction, this 2-ketoacid undergoes a metal-dependent reduction by NADPH to yield (R)-2,3-dihydroxy-isovalerate. This is Ketol-acid reductoisomerase (NADP(+)) from Geobacter metallireducens (strain ATCC 53774 / DSM 7210 / GS-15).